The sequence spans 482 residues: Dual specificity protein phosphatase 10 (482 aa).

In terms of domain architecture, Rhodanese spans 168–285 (PSQGPVIIDC…FKQNHENLCD (118 aa)). Positions 199–215 (KISRRRLQQGKITVLDL) are interaction with MAP kinases. The Tyrosine-protein phosphatase domain occupies 321 to 464 (ELTPILPFLF…LLEFEEDLNN (144 aa)). Residue cysteine 408 is the Phosphocysteine intermediate of the active site.

This sequence belongs to the protein-tyrosine phosphatase family. Non-receptor class dual specificity subfamily. Monomer. Interacts with MAPK14. As to expression, expressed in keratinocytes (at protein level). Detected in brain.

Its subcellular location is the cytoplasm. The protein localises to the nucleus. It catalyses the reaction O-phospho-L-tyrosyl-[protein] + H2O = L-tyrosyl-[protein] + phosphate. It carries out the reaction O-phospho-L-seryl-[protein] + H2O = L-seryl-[protein] + phosphate. The enzyme catalyses O-phospho-L-threonyl-[protein] + H2O = L-threonyl-[protein] + phosphate. In terms of biological role, protein phosphatase involved in the inactivation of MAP kinases. Has a specificity for the MAPK11/MAPK12/MAPK13/MAPK14 subfamily. It preferably dephosphorylates p38. The sequence is that of Dual specificity protein phosphatase 10 (DUSP10) from Homo sapiens (Human).